The sequence spans 512 residues: Dihydroniloticin synthase CYP71CD2 (512 aa).

A helical transmembrane segment spans residues 1–21 (MNLQLDYFSITSFLVFLVVLF). Cys449 contacts heme.

Belongs to the cytochrome P450 family. It depends on heme as a cofactor.

The protein resides in the membrane. The catalysed reaction is tirucalla-7,24-dien-3beta-ol + 2 reduced [NADPH--hemoprotein reductase] + 2 O2 = dihydroniloticin + 2 oxidized [NADPH--hemoprotein reductase] + 2 H2O + 2 H(+). Its pathway is secondary metabolite biosynthesis; terpenoid biosynthesis. Functionally, monooxygenase involved in the biosynthesis of limonoids triterpene natural products such as azadirachtin, an antifeedant widely used as bioinsecticide, and possessing many medicinal applications including anti-tumoral, anti-malarial, anti-rheumatic, antibacterial, anti-inflammatory, anti-pyretic and diuretic effects. Catalyzes the conversion of tirucalladienol to dihydroniloticin. This is Dihydroniloticin synthase CYP71CD2 from Azadirachta indica (Neem tree).